The following is a 158-amino-acid chain: Dysbindin domain-containing protein 1 (158 aa).

Residues 1-38 are disordered; the sequence is MEPSEGASPGGLVKEVDMPQAALSAPVPVTGTSGQSPM. A phosphoserine mark is found at serine 95 and serine 119. Residues 96-158 are disordered; the sequence is DDENVASDSH…ILTVERPKED (63 aa). Residues 125–141 show a composition bias toward basic and acidic residues; it reads TRAEQNREKQPFGDPER.

Belongs to the dysbindin family.

The polypeptide is Dysbindin domain-containing protein 1 (DBNDD1) (Bos taurus (Bovine)).